We begin with the raw amino-acid sequence, 189 residues long: Probable nicotinate-nucleotide adenylyltransferase (189 aa).

Belongs to the NadD family.

It carries out the reaction nicotinate beta-D-ribonucleotide + ATP + H(+) = deamido-NAD(+) + diphosphate. The protein operates within cofactor biosynthesis; NAD(+) biosynthesis; deamido-NAD(+) from nicotinate D-ribonucleotide: step 1/1. Catalyzes the reversible adenylation of nicotinate mononucleotide (NaMN) to nicotinic acid adenine dinucleotide (NaAD). The protein is Probable nicotinate-nucleotide adenylyltransferase of Bacillus cytotoxicus (strain DSM 22905 / CIP 110041 / 391-98 / NVH 391-98).